A 349-amino-acid polypeptide reads, in one-letter code: N-formyl peptide receptor 3 (349 aa).

Topologically, residues Met-1 to Ile-27 are extracellular. Asn-4 and Asn-10 each carry an N-linked (GlcNAc...) asparagine glycan. The helical transmembrane segment at Phe-28–Val-50 threads the bilayer. The Cytoplasmic portion of the chain corresponds to Ala-51–Thr-61. Residues Ile-62 to Val-83 form a helical membrane-spanning segment. The Extracellular segment spans residues Ser-84–Leu-100. Cys-98 and Cys-176 are joined by a disulfide. A helical transmembrane segment spans residues Val-101–Leu-121. Residues Asp-122–Ser-140 lie on the Cytoplasmic side of the membrane. A helical transmembrane segment spans residues Leu-141 to Ile-162. Over Phe-163–His-205 the chain is Extracellular. A helical membrane pass occupies residues Phe-206–Ala-226. The Cytoplasmic segment spans residues Lys-227–Val-242. The helical transmembrane segment at Phe-243 to Val-266 threads the bilayer. Over Trp-267 to Pro-286 the chain is Extracellular. Residues Thr-287–Gly-306 traverse the membrane as a helical segment. The Cytoplasmic portion of the chain corresponds to Ser-307 to Glu-349. The disordered stretch occupies residues Glu-327–Glu-349. The span at Ser-331–Ser-343 shows a compositional bias: polar residues.

Belongs to the G-protein coupled receptor 1 family.

The protein localises to the cell membrane. In terms of biological role, low affinity receptor for N-formyl-methionyl peptides, which are powerful neutrophils chemotactic factors. Binding of FMLP to the receptor causes activation of neutrophils. This response is mediated via a G-protein that activates a phosphatidylinositol-calcium second messenger system. This chain is N-formyl peptide receptor 3 (FPR3), found in Gorilla gorilla gorilla (Western lowland gorilla).